We begin with the raw amino-acid sequence, 540 residues long: MRVNNGLTPQELEAYGISDVHDIVYNPSYDLLYQEELDPSLTGYERGVLTNLGAVAVDTGIFTGRSPKDKYIVRDDTTRDTFWWADKGKGKNDNKPLSPETWQHLKGLVTKQLSGKRLFVVDAFCGANPDTRLSVRFITEVAWQAHFVKNMFIRPSDEELAGFKPDFIVMNGAKCTNPQWKEQGLNSENFVAFNLTERMQLIGGTWYGGEMKKGMFSMMNYLLPLKGIASMHCSANVGEKGDVAVFFGLSGTGKTTLSTDPKRRLIGDDEHGWDDDGVFNFEGGCYAKTIKLSKEAEPEIYNAIRRDALLENVTVREDGTIDFDDGSKTENTRVSYPIYHIENIVKPVSKAGHATKVIFLTADAFGVLPPVSRLTADQTQYHFLSGFTAKLAGTERGITEPTPTFSACFGAAFLSLHPTQYAEVLVKRMQAAGAQAYLVNTGWNGTGKRISIKDTRAIIDAILNGSLDNAETFTLPMFNLAIPTELPGVDTKILDPRNTYASPEQWQEKAETLAKLFIDNFDKYTDTPAGAALVAAGPKL.

Substrate is bound at residue Arg65. The residue at position 87 (Lys87) is an N6-acetyllysine. The substrate site is built by Tyr207 and Lys213. ATP-binding positions include Lys213, His232, and 248 to 256; that span reads GLSGTGKTT. Residues Lys213 and His232 each coordinate Mn(2+). Asp269 is a Mn(2+) binding site. Residues Glu297, Arg333, 449–450, and Thr455 contribute to the ATP site; that span reads RI. Arg333 serves as a coordination point for substrate. Lys523 is subject to N6-acetyllysine.

Belongs to the phosphoenolpyruvate carboxykinase (ATP) family. Monomer. The cofactor is Mn(2+).

The protein localises to the cytoplasm. It catalyses the reaction oxaloacetate + ATP = phosphoenolpyruvate + ADP + CO2. It participates in carbohydrate biosynthesis; gluconeogenesis. In terms of biological role, involved in the gluconeogenesis. Catalyzes the conversion of oxaloacetate (OAA) to phosphoenolpyruvate (PEP) through direct phosphoryl transfer between the nucleoside triphosphate and OAA. The protein is Phosphoenolpyruvate carboxykinase (ATP) of Escherichia coli O45:K1 (strain S88 / ExPEC).